The following is a 192-amino-acid chain: GTP cyclohydrolase 1 (192 aa).

3 residues coordinate Zn(2+): Cys-81, His-84, and Cys-153.

This sequence belongs to the GTP cyclohydrolase I family. Toroid-shaped homodecamer, composed of two pentamers of five dimers.

It catalyses the reaction GTP + H2O = 7,8-dihydroneopterin 3'-triphosphate + formate + H(+). It participates in cofactor biosynthesis; 7,8-dihydroneopterin triphosphate biosynthesis; 7,8-dihydroneopterin triphosphate from GTP: step 1/1. The chain is GTP cyclohydrolase 1 from Streptococcus mutans serotype c (strain ATCC 700610 / UA159).